We begin with the raw amino-acid sequence, 112 residues long: uncharacterized protein (112 aa).

This is an uncharacterized protein from Caenorhabditis elegans.